Here is a 126-residue protein sequence, read N- to C-terminus: Aspartate 1-decarboxylase (126 aa).

Ser-25 acts as the Schiff-base intermediate with substrate; via pyruvic acid in catalysis. Ser-25 carries the post-translational modification Pyruvic acid (Ser). Residue Thr-57 participates in substrate binding. Catalysis depends on Tyr-58, which acts as the Proton donor. Gly-73–Ala-75 is a binding site for substrate.

It belongs to the PanD family. As to quaternary structure, heterooctamer of four alpha and four beta subunits. The cofactor is pyruvate. In terms of processing, is synthesized initially as an inactive proenzyme, which is activated by self-cleavage at a specific serine bond to produce a beta-subunit with a hydroxyl group at its C-terminus and an alpha-subunit with a pyruvoyl group at its N-terminus.

The protein resides in the cytoplasm. The enzyme catalyses L-aspartate + H(+) = beta-alanine + CO2. It participates in cofactor biosynthesis; (R)-pantothenate biosynthesis; beta-alanine from L-aspartate: step 1/1. Functionally, catalyzes the pyruvoyl-dependent decarboxylation of aspartate to produce beta-alanine. This chain is Aspartate 1-decarboxylase, found in Sodalis glossinidius (strain morsitans).